A 216-amino-acid chain; its full sequence is Phosphatidylserine decarboxylase proenzyme (216 aa).

The Schiff-base intermediate with substrate; via pyruvic acid role is filled by Ser183. The residue at position 183 (Ser183) is a Pyruvic acid (Ser); by autocatalysis.

The protein belongs to the phosphatidylserine decarboxylase family. PSD-A subfamily. In terms of assembly, heterodimer of a large membrane-associated beta subunit and a small pyruvoyl-containing alpha subunit. Pyruvate serves as cofactor. In terms of processing, is synthesized initially as an inactive proenzyme. Formation of the active enzyme involves a self-maturation process in which the active site pyruvoyl group is generated from an internal serine residue via an autocatalytic post-translational modification. Two non-identical subunits are generated from the proenzyme in this reaction, and the pyruvate is formed at the N-terminus of the alpha chain, which is derived from the carboxyl end of the proenzyme. The post-translation cleavage follows an unusual pathway, termed non-hydrolytic serinolysis, in which the side chain hydroxyl group of the serine supplies its oxygen atom to form the C-terminus of the beta chain, while the remainder of the serine residue undergoes an oxidative deamination to produce ammonia and the pyruvoyl prosthetic group on the alpha chain.

It is found in the cell membrane. It carries out the reaction a 1,2-diacyl-sn-glycero-3-phospho-L-serine + H(+) = a 1,2-diacyl-sn-glycero-3-phosphoethanolamine + CO2. It functions in the pathway phospholipid metabolism; phosphatidylethanolamine biosynthesis; phosphatidylethanolamine from CDP-diacylglycerol: step 2/2. Its function is as follows. Catalyzes the formation of phosphatidylethanolamine (PtdEtn) from phosphatidylserine (PtdSer). This Chlorobaculum tepidum (strain ATCC 49652 / DSM 12025 / NBRC 103806 / TLS) (Chlorobium tepidum) protein is Phosphatidylserine decarboxylase proenzyme.